A 502-amino-acid chain; its full sequence is Interleukin-17 receptor B (502 aa).

A signal peptide spans 1–17; sequence MSLVLLSLAALCRSAVP. Residues 18 to 292 are Extracellular-facing; sequence REPTVQCGSE…NKSKPGGWLP (275 aa). N-linked (GlcNAc...) asparagine glycans are attached at residues N67, N103, N156, N183, N197, and N283. The chain crosses the membrane as a helical span at residues 293 to 313; sequence LLLLSLLVATWVLVAGIYLMW. Residues 314 to 502 lie on the Cytoplasmic side of the membrane; the sequence is RHERIKKTSF…QACHDGCCSL (189 aa). An SEFIR domain is found at 331 to 477; the sequence is PIKVLVVYPS…LMKDATAFCA (147 aa).

Interacts with DAZAP2. Interacts with TRAF3IP2. In terms of tissue distribution, expressed in several endocrine tissues, mostly in fetal and adult liver, kidney, pancreas, testis, colon, brain and small intestine; not detected in peripheral blood leukocytes, lymphoid organs, and most cell lines.

It localises to the cell membrane. The protein resides in the secreted. Receptor for the pro-inflammatory cytokines IL17B and IL17E. May play a role in controlling the growth and/or differentiation of hematopoietic cells. The polypeptide is Interleukin-17 receptor B (IL17RB) (Homo sapiens (Human)).